The following is a 268-amino-acid chain: Small ribosomal subunit protein uS3 (268 aa).

Residues Ile-38 to Lys-106 form the KH type-2 domain. The tract at residues Asn-217–Gly-268 is disordered. Residues Ser-237–Gly-268 show a composition bias toward low complexity.

The protein belongs to the universal ribosomal protein uS3 family. In terms of assembly, part of the 30S ribosomal subunit. Forms a tight complex with proteins S10 and S14.

Functionally, binds the lower part of the 30S subunit head. Binds mRNA in the 70S ribosome, positioning it for translation. The polypeptide is Small ribosomal subunit protein uS3 (Rhodococcus erythropolis (strain PR4 / NBRC 100887)).